A 132-amino-acid polypeptide reads, in one-letter code: Chemokine-like protein TAFA-5 (132 aa).

Positions 1–43 (MAPSPRTGSRQDATALPSMSSTFWAFMILASLLIAYCSQLAAG) are cleaved as a signal peptide. N-linked (GlcNAc...) asparagine glycosylation occurs at Asn-113.

It belongs to the TAFA family. As to expression, expressed in the subcutaneous and perirenal adipose tissue (at protein level). Highly expressed in adipose tissue with moderate expression in the brain and ovary. Isoform 2: Brain-specific.

It localises to the secreted. Acts as a chemokine-like protein by regulating cell proliferation and migration through activation of G protein-coupled receptors (GPCRs), such as S1PR2 and FPR2. Stimulates chemotactic migration of macrophages mediated by the MAPK3/ERK1 and AKT1 pathway. Blocks TNFSF11/RANKL-induced osteoclast formation from macrophages by inhibiting up-regulation of osteoclast fusogenic and differentiation genes. Stimulation of macrophage migration and inhibition of osteoclast formation is mediated via GPCR FPR2. Acts as an adipokine by negatively regulating vascular smooth muscle cell (VSMC) proliferation and migration in response to platelet-derived growth factor stimulation via GPCR S1PR2 and G protein GNA12/GNA13-transmitted RHOA signaling. Inhibits injury-induced cell proliferation and neointima formation in the femoral arteries. This is Chemokine-like protein TAFA-5 from Homo sapiens (Human).